The following is a 431-amino-acid chain: tRNA(Ile)-lysidine synthase (431 aa).

25 to 30 contacts ATP; the sequence is SGGLDS.

Belongs to the tRNA(Ile)-lysidine synthase family.

The protein resides in the cytoplasm. It catalyses the reaction cytidine(34) in tRNA(Ile2) + L-lysine + ATP = lysidine(34) in tRNA(Ile2) + AMP + diphosphate + H(+). Ligates lysine onto the cytidine present at position 34 of the AUA codon-specific tRNA(Ile) that contains the anticodon CAU, in an ATP-dependent manner. Cytidine is converted to lysidine, thus changing the amino acid specificity of the tRNA from methionine to isoleucine. This chain is tRNA(Ile)-lysidine synthase, found in Legionella pneumophila (strain Paris).